A 561-amino-acid polypeptide reads, in one-letter code: Acyl-CoA ligase ppsA (561 aa).

Residue N21 is glycosylated (N-linked (GlcNAc...) asparagine). A helical membrane pass occupies residues 71–91 (SILYPALFLAIVGVGAVYMGA). Residue 203–214 (MFATSGTSGLPK) participates in AMP binding. The N-linked (GlcNAc...) asparagine glycan is linked to N396. Residues 462–540 (ELEAELAQHP…DSIPRNSGGK (79 aa)) are AMP-binding.

The protein belongs to the ATP-dependent AMP-binding enzyme family.

Its subcellular location is the membrane. It carries out the reaction acetate + ATP + CoA = acetyl-CoA + ADP + phosphate. The enzyme catalyses propanoate + ATP + CoA = propanoyl-CoA + AMP + diphosphate. Its pathway is secondary metabolite biosynthesis. In terms of biological role, acyl-CoA ligase; part of the gene cluster that mediates the biosynthesis of 2,4'-dihydroxy-3'-methoxypropiophenone. The first step of the pathway is the conversion of acetate into acetyl-CoA by the acyl-CoA ligase ppsA. Acetyl-CoA is then used as a starter unit by the polyketide synthase ppsB and condensed with 4 malonyl-CoA unit to produce the pentaketide backbone. During polyketide extension, the polykedite chain is probably reduced and dehydrated by the KR and PT domains, respectively. O-methylation seems to be catalyzed by an unknown methyltransferase rather than by the CMeT domain of ppsB. Two hydroxylations and one further decarboxylation step catalyzed by yet unknown enzymes are then required to yield 4'-hydroxy-3'-methoxypropiophenone. PpsC functions as a carrier protein to transport 4'-hydroxy-3'-methoxypropiophenone to a specific cell compartment in which 4'-hydroxy-3'-methoxypropiophenone is hydroxylated to 2,4'-dihydroxy-3'-methoxypropiophenone by a still to be identified enzyme. The sequence is that of Acyl-CoA ligase ppsA from Aspergillus oryzae (strain ATCC 42149 / RIB 40) (Yellow koji mold).